The following is a 510-amino-acid chain: MEIRADEISRIIREQIKDYGKKVEVAETGSILSQADGVARIYGLAGAAAGELLEFPGGVRGLVLNLEEDNVGAAIMGPYEHIREGDPVKRTGLIAEVPVGEELLGRVVDGLGNPIDGRGPLNAKHHRKIEIKAPGIVKRKSVHEPMQTGLKAIDALVPIGRGQRELILGDRQTGKTAVAIDTILNNKGNNLYCFYVAIGQKQSTVARVVDTLKKYGAMEYTTVISASASDPAPMQYLAPYTGVTMAEYFRDSGRHALIIYDDLSKQAVAYRQLSLLLRRPPGREAYPGDVFYLHSRLLERAAKLSDKEGAGSLTALPIIETQAGDVSAYIPTNVISITDGQIFLESNLFYQGVRPAINVGISVSRVGGSAQIKAMKQVAGSLKLDLAQYRELAAFAQFGSDLDKATQETLARGERLVELLKQGQYAPLPVEKQVIQIYAGTQKDTDGQNWIRAVPTEQVVRYMRELIEFLDARHPGIAKAIAEKKALDDGIRKDLDAALREFAGIFKIEG.

An ATP-binding site is contributed by 169–176; that stretch reads GDRQTGKT.

It belongs to the ATPase alpha/beta chains family. As to quaternary structure, F-type ATPases have 2 components, CF(1) - the catalytic core - and CF(0) - the membrane proton channel. CF(1) has five subunits: alpha(3), beta(3), gamma(1), delta(1), epsilon(1). CF(0) has three main subunits: a(1), b(2) and c(9-12). The alpha and beta chains form an alternating ring which encloses part of the gamma chain. CF(1) is attached to CF(0) by a central stalk formed by the gamma and epsilon chains, while a peripheral stalk is formed by the delta and b chains.

It localises to the cell inner membrane. It catalyses the reaction ATP + H2O + 4 H(+)(in) = ADP + phosphate + 5 H(+)(out). Functionally, produces ATP from ADP in the presence of a proton gradient across the membrane. The alpha chain is a regulatory subunit. The sequence is that of ATP synthase subunit alpha from Anaeromyxobacter sp. (strain K).